The following is a 200-amino-acid chain: Pyridoxal phosphate homeostasis protein (200 aa).

The residue at position 11 (Lys11) is an N6-(pyridoxal phosphate)lysine.

This sequence belongs to the pyridoxal phosphate-binding protein YggS/PROSC family. As to quaternary structure, monomer.

Pyridoxal 5'-phosphate (PLP)-binding protein, which is involved in PLP homeostasis. The polypeptide is Pyridoxal phosphate homeostasis protein (Buchnera aphidicola subsp. Acyrthosiphon pisum (strain APS) (Acyrthosiphon pisum symbiotic bacterium)).